The following is a 123-amino-acid chain: Small ribosomal subunit protein uS12 (123 aa).

Residues methionine 1 to serine 47 form a disordered region. The residue at position 89 (aspartate 89) is a 3-methylthioaspartic acid.

The protein belongs to the universal ribosomal protein uS12 family. Part of the 30S ribosomal subunit. Contacts proteins S8 and S17. May interact with IF1 in the 30S initiation complex.

With S4 and S5 plays an important role in translational accuracy. In terms of biological role, interacts with and stabilizes bases of the 16S rRNA that are involved in tRNA selection in the A site and with the mRNA backbone. Located at the interface of the 30S and 50S subunits, it traverses the body of the 30S subunit contacting proteins on the other side and probably holding the rRNA structure together. The combined cluster of proteins S8, S12 and S17 appears to hold together the shoulder and platform of the 30S subunit. This Desulforapulum autotrophicum (strain ATCC 43914 / DSM 3382 / VKM B-1955 / HRM2) (Desulfobacterium autotrophicum) protein is Small ribosomal subunit protein uS12.